The chain runs to 506 residues: MAP kinase kinase MKK2/SSP33 (506 aa).

Residues 1–69 (MASMFRPPES…TSTTSSMASN (69 aa)) form a disordered region. Residues 26 to 52 (LVQNAKSTNDGQHLNRSPYSSVNESPY) show a composition bias toward polar residues. Residues 53–69 (SNNSTSATSTTSSMASN) are compositionally biased toward low complexity. The Protein kinase domain maps to 214–481 (ITTLGILGEG…PRQMLKHPWI (268 aa)). Residues 220 to 228 (LGEGAGGSV) and Lys-243 contribute to the ATP site. Catalysis depends on Asp-342, which acts as the Proton acceptor.

It belongs to the protein kinase superfamily. STE Ser/Thr protein kinase family. MAP kinase kinase subfamily.

It catalyses the reaction L-seryl-[protein] + ATP = O-phospho-L-seryl-[protein] + ADP + H(+). It carries out the reaction L-threonyl-[protein] + ATP = O-phospho-L-threonyl-[protein] + ADP + H(+). The enzyme catalyses L-tyrosyl-[protein] + ATP = O-phospho-L-tyrosyl-[protein] + ADP + H(+). Its function is as follows. Serine/threonine protein kinase involved in a signal transduction pathway that plays a role in yeast cell morphogenesis and cell growth. This pathway seems to start by SMP3; then involves the kinase PKC1 that may act on the BCK1 kinase that then phosphorylates MKK1 and MKK2 which themselves phosphorylate the MPK1 kinase. The protein is MAP kinase kinase MKK2/SSP33 (MKK2) of Saccharomyces cerevisiae (strain ATCC 204508 / S288c) (Baker's yeast).